Consider the following 327-residue polypeptide: MTATKQHKKVILVGDGAVGSSYAFALVTQNIAQELGIIDIFKEKTQGDAEDLSHALAFTSPKKIYAADYADCHDADLVVLTAGAPQKPGETRLDLVEKNLRINKEVVTQIVASGFKGIFLVAANPVDILTYSTWKFSGFPKERVIGSGTSLDSARFRQALAAKIGVDARSVHAYIMGEHGDSEFAVWSHANVAGVGLYDWLQANRDVDEQGLVDLFISVRDAAYSIINKKGATFYGIAVALARITKAILDDENAVLPLSVFQEGQYEGVEDCYIGQPAIVGAYGIVRPVNIPLNDAELQKMQASANQLKTIIDEAFSKEEFASAAKN.

NAD(+) contacts are provided by residues valine 18, aspartate 39, lysine 44, tyrosine 69, and 83–84; that span reads GA. Substrate contacts are provided by residues glutamine 86, arginine 92, and 124-127; that span reads NPVD. Residues 122 to 124 and serine 147 each bind NAD(+); that span reads AAN. A substrate-binding site is contributed by 152 to 155; that stretch reads DSAR. Arginine 157 and histidine 172 together coordinate beta-D-fructose 1,6-bisphosphate. Histidine 179 functions as the Proton acceptor in the catalytic mechanism. Tyrosine 224 carries the phosphotyrosine modification. Threonine 233 is a substrate binding site.

This sequence belongs to the LDH/MDH superfamily. LDH family. Homotetramer.

The protein localises to the cytoplasm. It catalyses the reaction (S)-lactate + NAD(+) = pyruvate + NADH + H(+). Its pathway is fermentation; pyruvate fermentation to lactate; (S)-lactate from pyruvate: step 1/1. Allosterically activated by fructose 1,6-bisphosphate (FBP). In terms of biological role, catalyzes the conversion of lactate to pyruvate. This Streptococcus equi subsp. equi (strain 4047) protein is L-lactate dehydrogenase.